Consider the following 296-residue polypeptide: tRNA dimethylallyltransferase (296 aa).

ATP is bound at residue 11–18 (GPTAVGKT). Position 13-18 (13-18 (TAVGKT)) interacts with substrate. Residues 36 to 39 (DSQQ) form an interaction with substrate tRNA region.

It belongs to the IPP transferase family. Monomer. Mg(2+) serves as cofactor.

The catalysed reaction is adenosine(37) in tRNA + dimethylallyl diphosphate = N(6)-dimethylallyladenosine(37) in tRNA + diphosphate. Catalyzes the transfer of a dimethylallyl group onto the adenine at position 37 in tRNAs that read codons beginning with uridine, leading to the formation of N6-(dimethylallyl)adenosine (i(6)A). In Streptococcus agalactiae serotype III (strain NEM316), this protein is tRNA dimethylallyltransferase.